The sequence spans 165 residues: Putative pre-16S rRNA nuclease (165 aa).

This sequence belongs to the YqgF nuclease family.

The protein localises to the cytoplasm. Its function is as follows. Could be a nuclease involved in processing of the 5'-end of pre-16S rRNA. The protein is Putative pre-16S rRNA nuclease of Brucella anthropi (strain ATCC 49188 / DSM 6882 / CCUG 24695 / JCM 21032 / LMG 3331 / NBRC 15819 / NCTC 12168 / Alc 37) (Ochrobactrum anthropi).